Reading from the N-terminus, the 143-residue chain is Transcriptional regulator MraZ (143 aa).

SpoVT-AbrB domains lie at 5–47 (TYEP…SAEE) and 76–119 (ASDE…DAAA).

The protein belongs to the MraZ family. As to quaternary structure, forms oligomers.

The protein resides in the cytoplasm. It localises to the nucleoid. The sequence is that of Transcriptional regulator MraZ from Kocuria rhizophila (strain ATCC 9341 / DSM 348 / NBRC 103217 / DC2201).